The chain runs to 214 residues: Non-structural protein NP-1 (214 aa).

Disordered stretches follow at residues 1-87 (MSSE…TNPY) and 192-214 (ESEE…NASN). Positions 33 to 43 (SRSRSPIRRHG) are enriched in basic residues. The segment covering 44 to 55 (EKNLEYAHHSNQ) has biased composition (basic and acidic residues). Residues 56–71 (ENRQSSYTALKTSDQA) show a composition bias toward polar residues. Residues 192–201 (ESEEVTDEEM) show a composition bias toward acidic residues.

This sequence belongs to the Bocaparvovirus Non-structural protein NP-1 family.

Its subcellular location is the host nucleus. Its function is as follows. Required for the expression of the capsid proteins. Performs the splicing and internal polyadenylation of the viral capsid-encoding mRNA precursor, which allows its maturation and expression. Transactivates the viral promoter. The sequence is that of Non-structural protein NP-1 (NP1) from Human bocavirus 2 (HBoV2).